The sequence spans 490 residues: Cysteine desulfurase, mitochondrial (490 aa).

Residues 161-162 (AT), Asn-241, Gln-269, and 289-291 (SSH) contribute to the pyridoxal 5'-phosphate site. The residue at position 292 (Lys-292) is an N6-(pyridoxal phosphate)lysine. A pyridoxal 5'-phosphate-binding site is contributed by Thr-329. Residue Cys-414 is the Cysteine persulfide intermediate of the active site. Position 414 (Cys-414) interacts with [2Fe-2S] cluster.

The protein belongs to the class-V pyridoxal-phosphate-dependent aminotransferase family. NifS/IscS subfamily. Pyridoxal 5'-phosphate serves as cofactor.

It localises to the mitochondrion. It catalyses the reaction (sulfur carrier)-H + L-cysteine = (sulfur carrier)-SH + L-alanine. Catalyzes the removal of elemental sulfur from cysteine to produce alanine. It supplies the inorganic sulfur for iron-sulfur (Fe-S) clusters. Plays a role in both tRNA-processing and mitochondrial metabolism. Involved in the 2-thio-modification of both 5-carboxymethylaminomethyl-2-thiouridine in mitochondrial tRNAs and 5-methoxycarbonylmethyl-2-thiouridine (mcm5s2U) in cytoplasmic tRNAs. In Eremothecium gossypii (strain ATCC 10895 / CBS 109.51 / FGSC 9923 / NRRL Y-1056) (Yeast), this protein is Cysteine desulfurase, mitochondrial.